The primary structure comprises 159 residues: Transcriptional repressor NrdR (159 aa).

The interval Met1–Asp21 is disordered. A zinc finger spans residues Cys3 to Cys34. In terms of domain architecture, ATP-cone spans Leu49 to Glu139.

Belongs to the NrdR family. Requires Zn(2+) as cofactor.

In terms of biological role, negatively regulates transcription of bacterial ribonucleotide reductase nrd genes and operons by binding to NrdR-boxes. This is Transcriptional repressor NrdR from Streptococcus thermophilus (strain ATCC BAA-491 / LMD-9).